The primary structure comprises 313 residues: Ribose-phosphate pyrophosphokinase (313 aa).

Residues 37–39 and 96–97 contribute to the ATP site; these read DGE and RQ. Mg(2+)-binding residues include H131 and D170. K193 is a catalytic residue. D-ribose 5-phosphate-binding positions include R195, D219, and 223–227; that span reads DTAGT.

It belongs to the ribose-phosphate pyrophosphokinase family. Class I subfamily. In terms of assembly, homohexamer. Mg(2+) serves as cofactor.

Its subcellular location is the cytoplasm. The enzyme catalyses D-ribose 5-phosphate + ATP = 5-phospho-alpha-D-ribose 1-diphosphate + AMP + H(+). It functions in the pathway metabolic intermediate biosynthesis; 5-phospho-alpha-D-ribose 1-diphosphate biosynthesis; 5-phospho-alpha-D-ribose 1-diphosphate from D-ribose 5-phosphate (route I): step 1/1. Its function is as follows. Involved in the biosynthesis of the central metabolite phospho-alpha-D-ribosyl-1-pyrophosphate (PRPP) via the transfer of pyrophosphoryl group from ATP to 1-hydroxyl of ribose-5-phosphate (Rib-5-P). In Pseudomonas aeruginosa (strain ATCC 15692 / DSM 22644 / CIP 104116 / JCM 14847 / LMG 12228 / 1C / PRS 101 / PAO1), this protein is Ribose-phosphate pyrophosphokinase.